We begin with the raw amino-acid sequence, 733 residues long: Protein OBERON 3 (733 aa).

Basic and acidic residues predominate over residues methionine 1–arginine 15. 2 disordered regions span residues methionine 1–lysine 42 and asparagine 118–asparagine 142. Polar residues predominate over residues proline 21–threonine 30. Residues asparagine 120 to leucine 153 are a coiled coil. The PHD-type zinc-finger motif lies at serine 436–lysine 500. The interval valine 592 to lysine 614 is disordered. Residues methionine 644–valine 733 are a coiled coil.

Self-interacts. Interacts with OBE1 and OBE2. Interacts with OBE4.

The protein resides in the nucleus. In terms of biological role, probable transcription factor that functions redundantly with OBE4 in specification of the hypophysis and establishment of the embryonic root. Involved in the activation of ARF5/MP-dependent gene expression during embryonic root meristem initiation. Involved in shoot meristem homeostasis. This is Protein OBERON 3 from Arabidopsis thaliana (Mouse-ear cress).